We begin with the raw amino-acid sequence, 140 residues long: Putative pre-16S rRNA nuclease (140 aa).

The protein belongs to the YqgF nuclease family.

It is found in the cytoplasm. Its function is as follows. Could be a nuclease involved in processing of the 5'-end of pre-16S rRNA. This is Putative pre-16S rRNA nuclease from Aeromonas hydrophila.